A 273-amino-acid chain; its full sequence is NH(3)-dependent NAD(+) synthetase (273 aa).

45 to 52 contributes to the ATP binding site; sequence GISGGQDS. Residue Asp51 coordinates Mg(2+). Position 139 (Arg139) interacts with deamido-NAD(+). Thr159 is an ATP binding site. Glu164 provides a ligand contact to Mg(2+). Lys172 and Asp179 together coordinate deamido-NAD(+). ATP contacts are provided by Lys188 and Thr210. Residue 259-260 coordinates deamido-NAD(+); the sequence is HK.

This sequence belongs to the NAD synthetase family. Homodimer.

It catalyses the reaction deamido-NAD(+) + NH4(+) + ATP = AMP + diphosphate + NAD(+) + H(+). Its pathway is cofactor biosynthesis; NAD(+) biosynthesis; NAD(+) from deamido-NAD(+) (ammonia route): step 1/1. Functionally, catalyzes the ATP-dependent amidation of deamido-NAD to form NAD. Uses ammonia as a nitrogen source. This Bacillus pumilus (strain SAFR-032) protein is NH(3)-dependent NAD(+) synthetase.